Here is a 461-residue protein sequence, read N- to C-terminus: Probable ribonuclease FAU-1 (461 aa).

The region spanning 89 to 158 is the S1 motif domain; that stretch reads GAVFYGEVTE…ARPSLATALR (70 aa).

Belongs to the FAU-1 family.

Probable RNase involved in rRNA stability through maturation and/or degradation of precursor rRNAs. Binds to RNA in loop regions with AU-rich sequences. The polypeptide is Probable ribonuclease FAU-1 (Natronomonas pharaonis (strain ATCC 35678 / DSM 2160 / CIP 103997 / JCM 8858 / NBRC 14720 / NCIMB 2260 / Gabara) (Halobacterium pharaonis)).